Consider the following 374-residue polypeptide: Glutamate 5-kinase (374 aa).

Lysine 9 serves as a coordination point for ATP. 3 residues coordinate substrate: serine 49, aspartate 136, and asparagine 148. ATP contacts are provided by residues 168–169 and 210–216; these read TD and TGGMRSK. The region spanning 276–354 is the PUA domain; that stretch reads AGMITVDSGA…EEARQYSYLH (79 aa).

The protein belongs to the glutamate 5-kinase family.

Its subcellular location is the cytoplasm. It carries out the reaction L-glutamate + ATP = L-glutamyl 5-phosphate + ADP. Its pathway is amino-acid biosynthesis; L-proline biosynthesis; L-glutamate 5-semialdehyde from L-glutamate: step 1/2. Functionally, catalyzes the transfer of a phosphate group to glutamate to form L-glutamate 5-phosphate. This chain is Glutamate 5-kinase, found in Geobacillus kaustophilus (strain HTA426).